The chain runs to 306 residues: Palmitoyl-protein thioesterase 1 (306 aa).

The N-terminal stretch at 1-27 (MASPSCLWLLAVALLPWTCAARALHHL) is a signal peptide. 3 disulfides stabilise this stretch: C45/C46, C96/C128, and C152/C160. S115 is an active-site residue. N-linked (GlcNAc...) asparagine glycosylation is found at N197, N212, and N232. Catalysis depends on residues D233 and H289.

The protein belongs to the palmitoyl-protein thioesterase family. In terms of assembly, interacts with CLN5, ATP5F1A and ATP5F1B. Post-translationally, glycosylated.

Its subcellular location is the lysosome. It is found in the secreted. The protein localises to the golgi apparatus. The protein resides in the endoplasmic reticulum. The catalysed reaction is S-hexadecanoyl-L-cysteinyl-[protein] + H2O = L-cysteinyl-[protein] + hexadecanoate + H(+). It carries out the reaction hexadecanoyl-CoA + H2O = hexadecanoate + CoA + H(+). It catalyses the reaction S-hexadecanoyl-N-acetylcysteamine + H2O = N-acetylcysteamine + hexadecanoate + H(+). The enzyme catalyses S-hexadecanoyl-N-acetylcysteine methyl ester + H2O = N-acetylcysteine methyl ester + hexadecanoate + H(+). Palmitoylation reduces PPT1 enzymatic activity. Its function is as follows. Has thioesterase activity against fatty acid thioesters with 14 -18 carbons, including palmitoyl-CoA, S-palmitoyl-N-acetylcysteamine, and palmitoylated proteins. In contrast to PPT2, PPT1 can hydrolyze palmitoylated proteins and palmitoylcysteine. This chain is Palmitoyl-protein thioesterase 1 (PPT1), found in Macaca fascicularis (Crab-eating macaque).